A 249-amino-acid polypeptide reads, in one-letter code: 4-hydroxy-tetrahydrodipicolinate reductase (249 aa).

Residues 8-13 (GVTGQM), 87-89 (GTT), and 111-114 (ATNF) each bind NAD(+). H143 functions as the Proton donor/acceptor in the catalytic mechanism. Residue H144 coordinates (S)-2,3,4,5-tetrahydrodipicolinate. K147 (proton donor) is an active-site residue. 153-154 (GT) serves as a coordination point for (S)-2,3,4,5-tetrahydrodipicolinate.

The protein belongs to the DapB family.

Its subcellular location is the cytoplasm. It carries out the reaction (S)-2,3,4,5-tetrahydrodipicolinate + NAD(+) + H2O = (2S,4S)-4-hydroxy-2,3,4,5-tetrahydrodipicolinate + NADH + H(+). It catalyses the reaction (S)-2,3,4,5-tetrahydrodipicolinate + NADP(+) + H2O = (2S,4S)-4-hydroxy-2,3,4,5-tetrahydrodipicolinate + NADPH + H(+). The protein operates within amino-acid biosynthesis; L-lysine biosynthesis via DAP pathway; (S)-tetrahydrodipicolinate from L-aspartate: step 4/4. In terms of biological role, catalyzes the conversion of 4-hydroxy-tetrahydrodipicolinate (HTPA) to tetrahydrodipicolinate. The protein is 4-hydroxy-tetrahydrodipicolinate reductase of Haloarcula marismortui (strain ATCC 43049 / DSM 3752 / JCM 8966 / VKM B-1809) (Halobacterium marismortui).